The primary structure comprises 286 residues: Penicillin-insensitive murein endopeptidase (286 aa).

Residues 1-22 (MNKILLKTTIIFTALFSLNVVA) form the signal peptide. Residues histidine 117, histidine 120, aspartate 127, aspartate 152, and histidine 218 each coordinate Zn(2+).

It belongs to the peptidase M74 family. Zn(2+) is required as a cofactor.

Its subcellular location is the periplasm. In terms of biological role, murein endopeptidase that cleaves the D-alanyl-meso-2,6-diamino-pimelyl amide bond that connects peptidoglycan strands. Likely plays a role in the removal of murein from the sacculus. This chain is Penicillin-insensitive murein endopeptidase (mepA), found in Haemophilus influenzae (strain ATCC 51907 / DSM 11121 / KW20 / Rd).